The primary structure comprises 446 residues: Probable glycine dehydrogenase (decarboxylating) subunit 1 (446 aa).

Belongs to the GcvP family. N-terminal subunit subfamily. As to quaternary structure, the glycine cleavage system is composed of four proteins: P, T, L and H. In this organism, the P 'protein' is a heterodimer of two subunits.

The catalysed reaction is N(6)-[(R)-lipoyl]-L-lysyl-[glycine-cleavage complex H protein] + glycine + H(+) = N(6)-[(R)-S(8)-aminomethyldihydrolipoyl]-L-lysyl-[glycine-cleavage complex H protein] + CO2. The glycine cleavage system catalyzes the degradation of glycine. The P protein binds the alpha-amino group of glycine through its pyridoxal phosphate cofactor; CO(2) is released and the remaining methylamine moiety is then transferred to the lipoamide cofactor of the H protein. In Methylocella silvestris (strain DSM 15510 / CIP 108128 / LMG 27833 / NCIMB 13906 / BL2), this protein is Probable glycine dehydrogenase (decarboxylating) subunit 1.